The following is a 394-amino-acid chain: Anhydro-N-acetylmuramic acid kinase (394 aa).

ATP is bound at residue 11–18; sequence GTSADGID.

This sequence belongs to the anhydro-N-acetylmuramic acid kinase family.

It carries out the reaction 1,6-anhydro-N-acetyl-beta-muramate + ATP + H2O = N-acetyl-D-muramate 6-phosphate + ADP + H(+). It functions in the pathway amino-sugar metabolism; 1,6-anhydro-N-acetylmuramate degradation. Its pathway is cell wall biogenesis; peptidoglycan recycling. Its function is as follows. Catalyzes the specific phosphorylation of 1,6-anhydro-N-acetylmuramic acid (anhMurNAc) with the simultaneous cleavage of the 1,6-anhydro ring, generating MurNAc-6-P. Is required for the utilization of anhMurNAc either imported from the medium or derived from its own cell wall murein, and thus plays a role in cell wall recycling. The chain is Anhydro-N-acetylmuramic acid kinase from Deinococcus geothermalis (strain DSM 11300 / CIP 105573 / AG-3a).